The following is a 583-amino-acid chain: Aspartate--tRNA ligase (583 aa).

Glutamate 174 provides a ligand contact to L-aspartate. The aspartate stretch occupies residues 198–201 (QITK). Arginine 220 serves as a coordination point for L-aspartate. Residues 220 to 222 (RDE) and glutamine 229 each bind ATP. Histidine 443 is an L-aspartate binding site. An ATP-binding site is contributed by glutamate 477. Residue arginine 484 participates in L-aspartate binding. 529-532 (GLDR) serves as a coordination point for ATP.

The protein belongs to the class-II aminoacyl-tRNA synthetase family. Type 1 subfamily. As to quaternary structure, homodimer.

The protein localises to the cytoplasm. It carries out the reaction tRNA(Asp) + L-aspartate + ATP = L-aspartyl-tRNA(Asp) + AMP + diphosphate. Catalyzes the attachment of L-aspartate to tRNA(Asp) in a two-step reaction: L-aspartate is first activated by ATP to form Asp-AMP and then transferred to the acceptor end of tRNA(Asp). The chain is Aspartate--tRNA ligase from Streptococcus thermophilus (strain CNRZ 1066).